Reading from the N-terminus, the 305-residue chain is Olfactory receptor 9G19 (305 aa).

The Extracellular portion of the chain corresponds to 1-24; it reads MDQNNNTVSEFIMLGFTTDPVIQK. A helical transmembrane segment spans residues 25–45; it reads VLFAVFLVVYTLTLMGNSSLI. At 46–55 the chain is on the cytoplasmic side; it reads MLICNDSRLH. The helical transmembrane segment at 56 to 76 threads the bilayer; that stretch reads TPMYFFIGNLSFLDLGLSSVY. Topologically, residues 77-96 are extracellular; the sequence is TPKILETCISEDKSISFAGC. Cysteine 96 and cysteine 178 are disulfide-bonded. The helical transmembrane segment at 97-117 threads the bilayer; it reads VAQFFFSAALDYTECYLLAAM. The Cytoplasmic segment spans residues 118 to 138; sequence AYDRYVAISKPLLYSQAMSLK. Residues 139–159 traverse the membrane as a helical segment; that stretch reads LCVCFVVASYVGGFINSVIIT. Over 160–204 the chain is Extracellular; the sequence is KDTFALTFCNDNVIDDFFCDIPPLVKLACGKKKSFQSVLFFLLTS. A helical membrane pass occupies residues 205–225; that stretch reads NVIIPIVFILATYLFIIATIL. The Cytoplasmic portion of the chain corresponds to 226-236; the sequence is RIRSTQGRLKA. The chain crosses the membrane as a helical span at residues 237-257; it reads FSTCSSHLISVTLYYGSILYI. Residues 258 to 270 lie on the Extracellular side of the membrane; that stretch reads YARPRSSYSLDRD. The helical transmembrane segment at 271–291 threads the bilayer; the sequence is KIVSTFYTVVFPMLNPLIYSL. Residues 292 to 305 are Cytoplasmic-facing; it reads RNKDVKEALNKLLK.

It belongs to the G-protein coupled receptor 1 family.

It is found in the cell membrane. Its function is as follows. Odorant receptor. This Mus musculus (Mouse) protein is Olfactory receptor 9G19.